The sequence spans 98 residues: NADH-ubiquinone oxidoreductase chain 4L (98 aa).

3 helical membrane passes run 1-21 (MAPI…GVLI), 28-48 (STLL…TLLI), and 59-79 (APLI…ALLV).

The protein belongs to the complex I subunit 4L family. Core subunit of respiratory chain NADH dehydrogenase (Complex I) which is composed of 45 different subunits.

Its subcellular location is the mitochondrion inner membrane. It carries out the reaction a ubiquinone + NADH + 5 H(+)(in) = a ubiquinol + NAD(+) + 4 H(+)(out). In terms of biological role, core subunit of the mitochondrial membrane respiratory chain NADH dehydrogenase (Complex I) which catalyzes electron transfer from NADH through the respiratory chain, using ubiquinone as an electron acceptor. Part of the enzyme membrane arm which is embedded in the lipid bilayer and involved in proton translocation. The chain is NADH-ubiquinone oxidoreductase chain 4L (MT-ND4L) from Isoodon macrourus (Short-nosed bandicoot).